The following is an 80-amino-acid chain: Putative membrane protein insertion efficiency factor (80 aa).

This sequence belongs to the UPF0161 family.

It is found in the cell membrane. In terms of biological role, could be involved in insertion of integral membrane proteins into the membrane. This Limosilactobacillus fermentum (strain NBRC 3956 / LMG 18251) (Lactobacillus fermentum) protein is Putative membrane protein insertion efficiency factor.